A 437-amino-acid polypeptide reads, in one-letter code: Histidinol dehydrogenase (437 aa).

The NAD(+) site is built by Tyr137, Gln199, and Asn222. Residues Ser245, Gln267, and His270 each contribute to the substrate site. Gln267 and His270 together coordinate Zn(2+). Catalysis depends on proton acceptor residues Glu335 and His336. Substrate-binding residues include His336, Asp369, Glu423, and His428. Asp369 contacts Zn(2+). Position 428 (His428) interacts with Zn(2+).

Belongs to the histidinol dehydrogenase family. Zn(2+) serves as cofactor.

It carries out the reaction L-histidinol + 2 NAD(+) + H2O = L-histidine + 2 NADH + 3 H(+). Its pathway is amino-acid biosynthesis; L-histidine biosynthesis; L-histidine from 5-phospho-alpha-D-ribose 1-diphosphate: step 9/9. In terms of biological role, catalyzes the sequential NAD-dependent oxidations of L-histidinol to L-histidinaldehyde and then to L-histidine. This is Histidinol dehydrogenase from Parasynechococcus marenigrum (strain WH8102).